The following is a 352-amino-acid chain: Protein YpbB (352 aa).

In terms of assembly, interacts with RecS and SSB (ssbA); the 6 C-terminal residues of SSB are required for interaction with YpbB.

It localises to the cytoplasm. The protein resides in the nucleoid. This is Protein YpbB (ypbB) from Bacillus subtilis (strain 168).